A 20-amino-acid chain; its full sequence is Collagenolytic protease 36 kDa A (20 aa).

One can recognise a Peptidase S1 domain in the interval 1–20 (IVGGTEVTPGEIPYQLSLQD). Residues 1-20 (IVGGTEVTPGEIPYQLSLQD) are disordered.

It belongs to the peptidase S1 family.

It carries out the reaction Hydrolysis of proteins, with broad specificity for peptide bonds. Native collagen is cleaved about 75% of the length of the molecule from the N-terminus. Low activity on small molecule substrates of both trypsin and chymotrypsin.. Functionally, this enzyme is a serine protease capable of degrading the native triple helix of collagen. The protein is Collagenolytic protease 36 kDa A of Paralithodes camtschaticus (Red king crab).